A 181-amino-acid polypeptide reads, in one-letter code: Ribulose bisphosphate carboxylase small subunit, chloroplastic (181 aa).

Residues 1–56 (MASISSSAIATVNRTTSTQASLAAPFTGLKSNVAFPVTKKANNDFSSLPSNGGRVQ) constitute a chloroplast transit peptide.

Belongs to the RuBisCO small chain family. In terms of assembly, heterohexadecamer of 8 large and 8 small subunits.

It is found in the plastid. The protein localises to the chloroplast. Functionally, ruBisCO catalyzes two reactions: the carboxylation of D-ribulose 1,5-bisphosphate, the primary event in carbon dioxide fixation, as well as the oxidative fragmentation of the pentose substrate. Both reactions occur simultaneously and in competition at the same active site. Although the small subunit is not catalytic it is essential for maximal activity. This is Ribulose bisphosphate carboxylase small subunit, chloroplastic from Lactuca sativa (Garden lettuce).